Consider the following 255-residue polypeptide: uncharacterized protein (255 aa).

Positions 1–23 (MKRLNTLVLYISFLILIISIVAG) are cleaved as a signal peptide. Residue Cys24 is the site of N-palmitoyl cysteine attachment. Cys24 carries the S-diacylglycerol cysteine lipid modification.

Belongs to the staphylococcal tandem lipoprotein family.

It localises to the cell membrane. This is an uncharacterized protein from Staphylococcus aureus (strain N315).